Here is a 484-residue protein sequence, read N- to C-terminus: Cysteine desulfurase, mitochondrial (484 aa).

The segment covering 29 to 42 (LATSASTSSSTTTS) has biased composition (low complexity). The segment at 29–69 (LATSASTSSSTTTSNAETGELHVSTPLDSPSVHPPDGSSIS) is disordered. Residues 153-154 (AT), Asn-233, Gln-261, and 281-283 (SSH) each bind pyridoxal 5'-phosphate. Lys-284 carries the N6-(pyridoxal phosphate)lysine modification. Thr-321 contacts pyridoxal 5'-phosphate. Cys-408 acts as the Cysteine persulfide intermediate in catalysis. Cys-408 lines the [2Fe-2S] cluster pocket.

It belongs to the class-V pyridoxal-phosphate-dependent aminotransferase family. NifS/IscS subfamily. The cofactor is pyridoxal 5'-phosphate.

The protein localises to the mitochondrion. The catalysed reaction is (sulfur carrier)-H + L-cysteine = (sulfur carrier)-SH + L-alanine. Its function is as follows. Catalyzes the removal of elemental sulfur from cysteine to produce alanine. It supplies the inorganic sulfur for iron-sulfur (Fe-S) clusters. Plays a role in both tRNA-processing and mitochondrial metabolism. Involved in the 2-thio-modification of both 5-carboxymethylaminomethyl-2-thiouridine in mitochondrial tRNAs and 5-methoxycarbonylmethyl-2-thiouridine (mcm5s2U) in cytoplasmic tRNAs. This chain is Cysteine desulfurase, mitochondrial, found in Candida maltosa (Yeast).